Here is a 244-residue protein sequence, read N- to C-terminus: Phosphoadenosine 5'-phosphosulfate reductase (244 aa).

The Nucleophile; cysteine thiosulfonate intermediate role is filled by cysteine 239.

This sequence belongs to the PAPS reductase family. CysH subfamily.

It is found in the cytoplasm. It carries out the reaction [thioredoxin]-disulfide + sulfite + adenosine 3',5'-bisphosphate + 2 H(+) = [thioredoxin]-dithiol + 3'-phosphoadenylyl sulfate. It participates in sulfur metabolism; hydrogen sulfide biosynthesis; sulfite from sulfate: step 3/3. Functionally, catalyzes the formation of sulfite from phosphoadenosine 5'-phosphosulfate (PAPS) using thioredoxin as an electron donor. The polypeptide is Phosphoadenosine 5'-phosphosulfate reductase (Escherichia coli O81 (strain ED1a)).